The following is a 195-amino-acid chain: Adenylate kinase (195 aa).

ATP is bound at residue 8-16 (GIPGVGKTT).

Belongs to the archaeal adenylate kinase family.

The protein localises to the cytoplasm. The enzyme catalyses AMP + ATP = 2 ADP. This chain is Adenylate kinase, found in Saccharolobus islandicus (strain M.14.25 / Kamchatka #1) (Sulfolobus islandicus).